The sequence spans 786 residues: Ciliated left-right organizer ZP-N domains-containing protein (786 aa).

Positions 1 to 18 are cleaved as a signal peptide; that stretch reads MWGSVAVVWAICLACIQP.

Expressed specifically by cells of the ciliated left-right organizer.

In terms of biological role, plays a role in left-right patterning process. The chain is Ciliated left-right organizer ZP-N domains-containing protein (Ciroz) from Mus musculus (Mouse).